The sequence spans 202 residues: Large ribosomal subunit protein bL25 (202 aa).

This sequence belongs to the bacterial ribosomal protein bL25 family. CTC subfamily. Part of the 50S ribosomal subunit; part of the 5S rRNA/L5/L18/L25 subcomplex. Contacts the 5S rRNA. Binds to the 5S rRNA independently of L5 and L18.

This is one of the proteins that binds to the 5S RNA in the ribosome where it forms part of the central protuberance. In Nitrosomonas eutropha (strain DSM 101675 / C91 / Nm57), this protein is Large ribosomal subunit protein bL25.